Consider the following 249-residue polypeptide: 1-(5-phosphoribosyl)-5-[(5-phosphoribosylamino)methylideneamino] imidazole-4-carboxamide isomerase (249 aa).

Aspartate 11 acts as the Proton acceptor in catalysis. The active-site Proton donor is aspartate 132.

It belongs to the HisA/HisF family.

It is found in the cytoplasm. It carries out the reaction 1-(5-phospho-beta-D-ribosyl)-5-[(5-phospho-beta-D-ribosylamino)methylideneamino]imidazole-4-carboxamide = 5-[(5-phospho-1-deoxy-D-ribulos-1-ylimino)methylamino]-1-(5-phospho-beta-D-ribosyl)imidazole-4-carboxamide. Its pathway is amino-acid biosynthesis; L-histidine biosynthesis; L-histidine from 5-phospho-alpha-D-ribose 1-diphosphate: step 4/9. The sequence is that of 1-(5-phosphoribosyl)-5-[(5-phosphoribosylamino)methylideneamino] imidazole-4-carboxamide isomerase from Nitrobacter winogradskyi (strain ATCC 25391 / DSM 10237 / CIP 104748 / NCIMB 11846 / Nb-255).